The sequence spans 318 residues: Ribose-phosphate pyrophosphokinase (318 aa).

ATP is bound by residues 46–48 (DGE) and 105–106 (RQ). Residues H139 and D178 each coordinate Mg(2+). K201 is a catalytic residue. Residues R203, D227, and 231 to 235 (DTAGT) each bind D-ribose 5-phosphate.

It belongs to the ribose-phosphate pyrophosphokinase family. Class I subfamily. As to quaternary structure, homohexamer. It depends on Mg(2+) as a cofactor.

It localises to the cytoplasm. It carries out the reaction D-ribose 5-phosphate + ATP = 5-phospho-alpha-D-ribose 1-diphosphate + AMP + H(+). It participates in metabolic intermediate biosynthesis; 5-phospho-alpha-D-ribose 1-diphosphate biosynthesis; 5-phospho-alpha-D-ribose 1-diphosphate from D-ribose 5-phosphate (route I): step 1/1. Functionally, involved in the biosynthesis of the central metabolite phospho-alpha-D-ribosyl-1-pyrophosphate (PRPP) via the transfer of pyrophosphoryl group from ATP to 1-hydroxyl of ribose-5-phosphate (Rib-5-P). This is Ribose-phosphate pyrophosphokinase from Helicobacter pylori (strain J99 / ATCC 700824) (Campylobacter pylori J99).